The following is a 184-amino-acid chain: Threonylcarbamoyl-AMP synthase (184 aa).

Residues 1–184 enclose the YrdC-like domain; the sequence is MNNLENIVEQ…IFTQHIFRQG (184 aa).

Belongs to the SUA5 family. TsaC subfamily.

It localises to the cytoplasm. It carries out the reaction L-threonine + hydrogencarbonate + ATP = L-threonylcarbamoyladenylate + diphosphate + H2O. Functionally, required for the formation of a threonylcarbamoyl group on adenosine at position 37 (t(6)A37) in tRNAs that read codons beginning with adenine. Catalyzes the conversion of L-threonine, HCO(3)(-)/CO(2) and ATP to give threonylcarbamoyl-AMP (TC-AMP) as the acyladenylate intermediate, with the release of diphosphate. This Actinobacillus pleuropneumoniae serotype 7 (strain AP76) protein is Threonylcarbamoyl-AMP synthase.